Consider the following 275-residue polypeptide: Putative phosphoenolpyruvate synthase regulatory protein (275 aa).

157–164 serves as a coordination point for ADP; sequence GVSRCGKT.

This sequence belongs to the pyruvate, phosphate/water dikinase regulatory protein family. PSRP subfamily.

It catalyses the reaction [pyruvate, water dikinase] + ADP = [pyruvate, water dikinase]-phosphate + AMP + H(+). The enzyme catalyses [pyruvate, water dikinase]-phosphate + phosphate + H(+) = [pyruvate, water dikinase] + diphosphate. Functionally, bifunctional serine/threonine kinase and phosphorylase involved in the regulation of the phosphoenolpyruvate synthase (PEPS) by catalyzing its phosphorylation/dephosphorylation. This chain is Putative phosphoenolpyruvate synthase regulatory protein, found in Bordetella pertussis (strain Tohama I / ATCC BAA-589 / NCTC 13251).